The sequence spans 420 residues: MNIFNNNLHETDKEINEIIKHEKLRQSSVIELIASENFVSPAVLEAQGALLTNKYAEGYPSKRFYNGCEEVDKAENLAIERVKKLFNCKYANVQPHSGSQANQAVYLALLQPGDTVLGMSLDSGGHLTHGAAPNMSGKWFNAVSYSVNKETYLIDYDEIERLADLHKPKLLIAGFSAYPRNIDFAKFREIVDKVGAYFMADIAHIAGLVATGEHQSPIPYAHAVTSTTHKTLRGPRGGLILSNDEEIGHKINSALFPGLQGGPLMHIIAAKAVAFLENLQPEYKSYIQQVISNAKALASSLQERGYDILTGGTDNHIVLVDLRKDGITGKLAANSLDRAGITCNKNAIPFDETSPFITSGIRLGTPACTTRGFKEKDFVLVGHMVADILDGLKNNEDNSALEQQVLNEVTKLIELFPFYG.

(6S)-5,6,7,8-tetrahydrofolate-binding positions include Leu121 and 125 to 127; that span reads GHL. Residue Lys230 is modified to N6-(pyridoxal phosphate)lysine. (6S)-5,6,7,8-tetrahydrofolate-binding positions include Glu246 and 354–356; that span reads SPF.

The protein belongs to the SHMT family. In terms of assembly, homodimer. Requires pyridoxal 5'-phosphate as cofactor.

The protein resides in the cytoplasm. It carries out the reaction (6R)-5,10-methylene-5,6,7,8-tetrahydrofolate + glycine + H2O = (6S)-5,6,7,8-tetrahydrofolate + L-serine. Its pathway is one-carbon metabolism; tetrahydrofolate interconversion. It functions in the pathway amino-acid biosynthesis; glycine biosynthesis; glycine from L-serine: step 1/1. Functionally, catalyzes the reversible interconversion of serine and glycine with tetrahydrofolate (THF) serving as the one-carbon carrier. This reaction serves as the major source of one-carbon groups required for the biosynthesis of purines, thymidylate, methionine, and other important biomolecules. Also exhibits THF-independent aldolase activity toward beta-hydroxyamino acids, producing glycine and aldehydes, via a retro-aldol mechanism. This is Serine hydroxymethyltransferase from Rickettsia rickettsii (strain Iowa).